Reading from the N-terminus, the 358-residue chain is 3-dehydroquinate synthase (358 aa).

Residues 70–75, 104–108, 128–129, lysine 141, lysine 150, and 168–171 contribute to the NAD(+) site; these read DGEQYK, GVIGD, TT, and CLHT. Zn(2+)-binding residues include glutamate 183, histidine 246, and histidine 263.

It belongs to the sugar phosphate cyclases superfamily. Dehydroquinate synthase family. Requires Co(2+) as cofactor. Zn(2+) is required as a cofactor. It depends on NAD(+) as a cofactor.

The protein localises to the cytoplasm. It catalyses the reaction 7-phospho-2-dehydro-3-deoxy-D-arabino-heptonate = 3-dehydroquinate + phosphate. It functions in the pathway metabolic intermediate biosynthesis; chorismate biosynthesis; chorismate from D-erythrose 4-phosphate and phosphoenolpyruvate: step 2/7. In terms of biological role, catalyzes the conversion of 3-deoxy-D-arabino-heptulosonate 7-phosphate (DAHP) to dehydroquinate (DHQ). This Shewanella loihica (strain ATCC BAA-1088 / PV-4) protein is 3-dehydroquinate synthase.